The following is a 174-amino-acid chain: Dual-action ribosomal maturation protein DarP (174 aa).

It belongs to the DarP family.

The protein resides in the cytoplasm. Member of a network of 50S ribosomal subunit biogenesis factors which assembles along the 30S-50S interface, preventing incorrect 23S rRNA structures from forming. Promotes peptidyl transferase center (PTC) maturation. This chain is Dual-action ribosomal maturation protein DarP, found in Vibrio atlanticus (strain LGP32) (Vibrio splendidus (strain Mel32)).